Here is a 902-residue protein sequence, read N- to C-terminus: Protein translocase subunit SecA (902 aa).

ATP-binding positions include Q87, 105-109 (GEGKT), and D512. The tract at residues 836 to 902 (DVEKVEEQHR…KFKQCCGKLK (67 aa)) is disordered. A compositionally biased stretch (basic and acidic residues) spans 840 to 863 (VEEQHRKSENAPREYQHEEVEHVG). Positions 886, 888, 897, and 898 each coordinate Zn(2+).

This sequence belongs to the SecA family. In terms of assembly, monomer and homodimer. Part of the essential Sec protein translocation apparatus which comprises SecA, SecYEG and auxiliary proteins SecDF-YajC and YidC. Requires Zn(2+) as cofactor.

The protein resides in the cell inner membrane. The protein localises to the cytoplasm. The catalysed reaction is ATP + H2O + cellular proteinSide 1 = ADP + phosphate + cellular proteinSide 2.. In terms of biological role, part of the Sec protein translocase complex. Interacts with the SecYEG preprotein conducting channel. Has a central role in coupling the hydrolysis of ATP to the transfer of proteins into and across the cell membrane, serving both as a receptor for the preprotein-SecB complex and as an ATP-driven molecular motor driving the stepwise translocation of polypeptide chains across the membrane. The sequence is that of Protein translocase subunit SecA from Pseudoalteromonas translucida (strain TAC 125).